The primary structure comprises 702 residues: Phosphatase and actin regulator 4 (702 aa).

Disordered regions lie at residues 1 to 38, 82 to 194, and 222 to 363; these read MEDP…SKFS, GVLL…SSGG, and NLSV…PFPA. One copy of the RPEL 1 repeat lies at 63–88; it reads EVLERKISMRKPREELVKRGVLLEDP. Residues 106–120 are compositionally biased toward polar residues; sequence GHTTPIGNARSSSPV. A phosphoserine mark is found at S116, S118, S131, and S147. Over residues 147–156 the composition is skewed to polar residues; it reads STGSQPNSEA. Over residues 163-173 the composition is skewed to pro residues; that stretch reads VPKPPLLPPKR. The span at 233–250 shows a compositional bias: low complexity; it reads TLPAAPASTNTTATPSLT. 2 positions are modified to phosphoserine: S270 and S291. Over residues 301 to 318 the composition is skewed to polar residues; that stretch reads PSTSVPTLESAAAITTKT. A phosphoserine mark is found at S342 and S344. Residues 342-362 are compositionally biased toward pro residues; that stretch reads SPSPPLPTHIPPEPPRTPPFP. A Phosphothreonine modification is found at T358. S427 is subject to Phosphoserine. T432 is subject to Phosphothreonine. A phosphoserine mark is found at S443, S453, and S464. Positions 473 to 536 are disordered; sequence KVPDDEEEEE…EEDEDESYQS (64 aa). Residues 486-497 show a composition bias toward low complexity; sequence PSTFSEETTPTS. Residues 508-518 show a composition bias toward acidic residues; that stretch reads EEEEKESDSDS. Phosphoserine occurs at positions 514, 516, 557, and 590. 2 RPEL repeats span residues 583–608 and 621–646; these read NTLI…QPKN and RRLT…RFNE. The interval 592–615 is disordered; sequence RPTPEELEQRNILQPKNEADRQAE. S628 bears the Phosphoserine mark.

The protein belongs to the phosphatase and actin regulator family. In terms of assembly, binds PPP1CA and actin.

It is found in the cytoplasm. The protein resides in the cell projection. Its subcellular location is the lamellipodium. Functionally, regulator of protein phosphatase 1 (PP1) required for neural tube and optic fissure closure, and enteric neural crest cell (ENCCs) migration during development. Acts as an activator of PP1 by interacting with PPP1CA and preventing phosphorylation of PPP1CA at 'Thr-320'. During neural tube closure, localizes to the ventral neural tube and activates PP1, leading to down-regulate cell proliferation within cranial neural tissue and the neural retina. Also acts as a regulator of migration of enteric neural crest cells (ENCCs) by activating PP1, leading to dephosphorylation and subsequent activation of cofilin (COF1 or COF2) and repression of the integrin signaling through the RHO/ROCK pathway. This chain is Phosphatase and actin regulator 4 (PHACTR4), found in Pongo abelii (Sumatran orangutan).